We begin with the raw amino-acid sequence, 397 residues long: Acetate kinase (397 aa).

Asparagine 8 lines the Mg(2+) pocket. Lysine 15 is a binding site for ATP. Arginine 90 provides a ligand contact to substrate. The Proton donor/acceptor role is filled by aspartate 147. 207–211 contacts ATP; sequence HLGAG. Residue glutamate 382 coordinates Mg(2+).

Belongs to the acetokinase family. In terms of assembly, homodimer. It depends on Mg(2+) as a cofactor. Mn(2+) is required as a cofactor.

The protein resides in the cytoplasm. It catalyses the reaction acetate + ATP = acetyl phosphate + ADP. It participates in metabolic intermediate biosynthesis; acetyl-CoA biosynthesis; acetyl-CoA from acetate: step 1/2. Functionally, catalyzes the formation of acetyl phosphate from acetate and ATP. Can also catalyze the reverse reaction. The polypeptide is Acetate kinase (Lactiplantibacillus plantarum (strain ATCC BAA-793 / NCIMB 8826 / WCFS1) (Lactobacillus plantarum)).